A 657-amino-acid chain; its full sequence is Sodium/glucose cotransporter 4 (657 aa).

Residues 1 to 24 lie on the Extracellular side of the membrane; the sequence is MPASPEPVTATPEPEEVPAKFTLE. The chain crosses the membrane as a helical span at residues 25-45; it reads AADIAVVVVYFVFVLAVGIWS. Over 46–79 the chain is Cytoplasmic; the sequence is SIRANRGTVGGYFLAGRSMTWWPIGASLMSSNVG. Residues 80 to 100 traverse the membrane as a helical segment; sequence SGLFIGLAGTGAAGGLAVGGF. Topologically, residues 101-104 are extracellular; that stretch reads EWNA. A helical transmembrane segment spans residues 105 to 125; sequence AWVLIALGWIFVPVYISAGVV. Over 126 to 147 the chain is Cytoplasmic; the sequence is TMPEYLRKRFGGQRIRIYMSVL. The chain crosses the membrane as a helical span at residues 148–168; it reads SLILYILTKISTDIFSGALFI. At 169–180 the chain is on the extracellular side; that stretch reads QVSLGWDLYLST. The chain crosses the membrane as a helical span at residues 181–201; that stretch reads VILLAVTALYTIAGGLTAVIY. The Cytoplasmic segment spans residues 202-207; it reads TDALQT. A helical membrane pass occupies residues 208–228; sequence VIMVIGAFVLMFIAFDKVGWY. The Extracellular portion of the chain corresponds to 229–265; it reads EGLLVQYEKAAPALTVPNTTCHLPRSDAFHIFRDPVT. Asn-246 carries N-linked (GlcNAc...) asparagine glycosylation. The chain crosses the membrane as a helical span at residues 266–286; the sequence is GDIPWPGLIFGLTVLATWVWC. Residues 287–307 are Cytoplasmic-facing; it reads TDQVIVQRSLSAKNLSHAKAG. A helical membrane pass occupies residues 308–328; the sequence is SVLGGYLKVFPMFFVVMPGMI. Over 329–373 the chain is Extracellular; sequence SRALYPDEVACVDPDECQKICGAKVGCSNIAYPKLVVELMPVGMR. A helical transmembrane segment spans residues 374-396; it reads GLMIAVMMAALMSSLTSIFNSSS. The Cytoplasmic segment spans residues 397 to 417; it reads TLFTMDIWQRIRPRASEKELM. The chain crosses the membrane as a helical span at residues 418 to 438; sequence VVGRVFILLLVALSIVWIPVI. Topologically, residues 439-451 are extracellular; sequence QTANSGQLFDYIQ. A helical transmembrane segment spans residues 452–472; it reads AITSFLSPPITTVFIMAIFWG. Over 473 to 478 the chain is Cytoplasmic; that stretch reads RVNEQG. The chain crosses the membrane as a helical span at residues 479–499; sequence AFWGLMVGLVVGMVRMIMEFV. At 500–520 the chain is on the extracellular side; sequence YGTPSCGETDLRPSLLKDVHY. A helical transmembrane segment spans residues 521–541; sequence LYFALILLALTVLIITAVSLC. Topologically, residues 542–636 are cytoplasmic; the sequence is TAPIPEKHLV…SIEEDHMWKT (95 aa). Residues 637-657 form a helical membrane-spanning segment; that stretch reads VCNVNALILLTANVFLWGYFA.

Belongs to the sodium:solute symporter (SSF) (TC 2.A.21) family.

Its subcellular location is the membrane. In terms of biological role, probable sodium-dependent sugar transporter. The chain is Sodium/glucose cotransporter 4 (slc5a9) from Danio rerio (Zebrafish).